The following is a 431-amino-acid chain: MSKLDTTKSKIAFKEAQKYMPGGVNSPVRAFKNVGGDPLFIDHGKDEYIYDIDGNKYIDYVLSWGPLILGHADDHVVAELDKAVAKGTSYGAPTLQETELAKIVNKIMPSIEMIRMVSSGTEATMSAIRLARGYTHRKKIVKFVGNYHGHSDSLLVDAGSGLATFGINTSPGVPDDLAYDTLTVAYNDVAGVKKLFAEHGDEIACAIVEPVAGNMGVIPGTQEFLQTLRNVTNEHGALLIFDEVMSGFRAAYHGVQSLVNITPDLTTLGKVIGGGLPVGAFGGRREIMENITPAGDIYHAGTLSGNPLAMTGGISTLEQLTPDDYVEMDKKVTALTEGIKHAADQYGVPMTVHHVGTMWSYFYNSDPINNFDDVKACDQKLFEKCFWELLAHGVYVAPSQFETNFISTKHTDEDIEKTIAAFDAAFNAATK.

Lys-270 is subject to N6-(pyridoxal phosphate)lysine.

The protein belongs to the class-III pyridoxal-phosphate-dependent aminotransferase family. HemL subfamily. As to quaternary structure, homodimer. It depends on pyridoxal 5'-phosphate as a cofactor.

The protein resides in the cytoplasm. It carries out the reaction (S)-4-amino-5-oxopentanoate = 5-aminolevulinate. It functions in the pathway porphyrin-containing compound metabolism; protoporphyrin-IX biosynthesis; 5-aminolevulinate from L-glutamyl-tRNA(Glu): step 2/2. The polypeptide is Glutamate-1-semialdehyde 2,1-aminomutase (Limosilactobacillus reuteri subsp. reuteri (strain JCM 1112) (Lactobacillus reuteri)).